Reading from the N-terminus, the 473-residue chain is Chromosomal replication initiator protein DnaA (473 aa).

Residues 1–73 (MTNIEQDRWS…LSCWQAEMPQ (73 aa)) are domain I, interacts with DnaA modulators. Residues 73–129 (QVHRVDLTVRTAMRCAAPAKDAPAHAEPRRDDGRPAPELRATAIAPVSATHEALGGS) form a domain II region. The interval 130–352 (PLDPRLTFGS…GAINRLLAHS (223 aa)) is domain III, AAA+ region. ATP-binding residues include Gly177, Gly179, Lys180, and Thr181. The tract at residues 353-473 (KLNAQPVTLE…VELLKRQLQE (121 aa)) is domain IV, binds dsDNA.

This sequence belongs to the DnaA family. As to quaternary structure, oligomerizes as a right-handed, spiral filament on DNA at oriC.

It is found in the cytoplasm. In terms of biological role, plays an essential role in the initiation and regulation of chromosomal replication. ATP-DnaA binds to the origin of replication (oriC) to initiate formation of the DNA replication initiation complex once per cell cycle. Binds the DnaA box (a 9 base pair repeat at the origin) and separates the double-stranded (ds)DNA. Forms a right-handed helical filament on oriC DNA; dsDNA binds to the exterior of the filament while single-stranded (ss)DNA is stabiized in the filament's interior. The ATP-DnaA-oriC complex binds and stabilizes one strand of the AT-rich DNA unwinding element (DUE), permitting loading of DNA polymerase. After initiation quickly degrades to an ADP-DnaA complex that is not apt for DNA replication. Binds acidic phospholipids. The polypeptide is Chromosomal replication initiator protein DnaA (Rhodopseudomonas palustris (strain BisB18)).